The primary structure comprises 313 residues: Protein FixB (313 aa).

Leu-255–Asp-283 provides a ligand contact to FAD.

Belongs to the ETF alpha-subunit/FixB family. Heterodimer of FixA and FixB.

It participates in amine and polyamine metabolism; carnitine metabolism. Its function is as follows. Required for anaerobic carnitine reduction. May bring reductant to CaiA. This chain is Protein FixB, found in Escherichia coli (strain K12 / MC4100 / BW2952).